The sequence spans 478 residues: Protein ZINC INDUCED FACILITATOR-LIKE 1 (478 aa).

A run of 12 helical transmembrane segments spans residues Ile43 to Ile63, Phe81 to Ala101, Pro108 to Leu128, Phe130 to Ile150, Ala169 to Ala189, Phe208 to Ser228, Ile280 to Trp300, Val317 to Ser337, Ile346 to Ala367, Val378 to Ile398, Ile415 to Phe435, and Val453 to Leu473.

This sequence belongs to the major facilitator superfamily. Predominantly expressed in roots and stomatal guard cells. Detected in anther stamen filaments and shoot apical meristem. In the mature portion of roots, restricted to the cortex. At the root tip, highly expressed in both the cortical and epidermal cell layers of the apical meristem and the transition zone, while absent from the quiescent center or the columella cells. Not detected in lateral root primordia.

It is found in the cell membrane. The protein resides in the vacuole membrane. In terms of biological role, major facilitator superfamily (MFS) transporter probably involved in 2,4-dichlorophenoxyacetic acid (2,4-D) export. K(+) may be the physiological substrate of the transporter. Modulates root auxin-related processes. Involved in auxin efflux and acts as a positive regulator of shootward transport at the root apex. May mediate proton efflux from the vacuolar compartment. Its function is as follows. Mediates drought stress tolerance by regulating stomatal closure. The protein is Protein ZINC INDUCED FACILITATOR-LIKE 1 (ZIFL1) of Arabidopsis thaliana (Mouse-ear cress).